The following is a 169-amino-acid chain: Cell division inhibitor SulA (169 aa).

Residues 1–15 are compositionally biased toward polar residues; it reads MFTSAHANRSAQASA. Positions 1 to 22 are disordered; it reads MFTSAHANRSAQASASAGHYAH. The ftsZ binding stretch occupies residues 106 to 112; sequence ALRTGNY. Residues 162–169 form a lon protease binding region; sequence KIHSNLYH.

The protein belongs to the SulA family. In terms of assembly, interacts with FtsZ. Is rapidly cleaved and degraded by the Lon protease once DNA damage is repaired.

Functionally, component of the SOS system and an inhibitor of cell division. Accumulation of SulA causes rapid cessation of cell division and the appearance of long, non-septate filaments. In the presence of GTP, binds a polymerization-competent form of FtsZ in a 1:1 ratio, thus inhibiting FtsZ polymerization and therefore preventing it from participating in the assembly of the Z ring. This mechanism prevents the premature segregation of damaged DNA to daughter cells during cell division. The sequence is that of Cell division inhibitor SulA from Klebsiella pneumoniae (strain 342).